We begin with the raw amino-acid sequence, 180 residues long: Ribosome-recycling factor (180 aa).

Positions 135–156 (SDLKKDNDLSEDSRHRTEDDIQ) are disordered.

It belongs to the RRF family.

It localises to the cytoplasm. In terms of biological role, responsible for the release of ribosomes from messenger RNA at the termination of protein biosynthesis. May increase the efficiency of translation by recycling ribosomes from one round of translation to another. The protein is Ribosome-recycling factor of Oenococcus oeni (strain ATCC BAA-331 / PSU-1).